Here is a 96-residue protein sequence, read N- to C-terminus: Transcription and mRNA export factor SUS1 (96 aa).

Lysine 68 is covalently cross-linked (Glycyl lysine isopeptide (Lys-Gly) (interchain with G-Cter in ubiquitin)).

It belongs to the ENY2 family. In terms of assembly, component of the nuclear pore complex (NPC)-associated TREX-2 complex (transcription and export complex 2), composed of at least SUS1, SAC3, THP1, SEM1, and CDC31. TREX-2 contains 2 SUS1 chains. The TREX-2 complex interacts with the nucleoporin NUP1. Component of the 1.8 MDa SAGA transcription coactivator-HAT complex. SAGA is built of 5 distinct domains with specialized functions. Within the SAGA complex, SUS1, SGF11, SGF73 and UBP8 form an additional subcomplex of SAGA called the DUB module (deubiquitination module). Interacts directly with THP1, SAC3, SGF11, and with the RNA polymerase II.

Its subcellular location is the nucleus. It is found in the nucleoplasm. The protein resides in the cytoplasm. The protein localises to the P-body. In terms of biological role, involved in mRNA export coupled transcription activation by association with both the TREX-2 and the SAGA complexes. At the promoters, SAGA is required for recruitment of the basal transcription machinery. It influences RNA polymerase II transcriptional activity through different activities such as TBP interaction and promoter selectivity, interaction with transcription activators, and chromatin modification through histone acetylation and deubiquitination. Within the SAGA complex, participates in a subcomplex required for deubiquitination of H2B and for the maintenance of steady-state H3 methylation levels. The TREX-2 complex functions in docking export-competent ribonucleoprotein particles (mRNPs) to the nuclear entrance of the nuclear pore complex (nuclear basket). TREX-2 participates in mRNA export and accurate chromatin positioning in the nucleus by tethering genes to the nuclear periphery. May also be involved in cytoplasmic mRNA decay by interaction with components of P-bodies. The chain is Transcription and mRNA export factor SUS1 from Saccharomyces cerevisiae (strain YJM789) (Baker's yeast).